The primary structure comprises 202 residues: UPF0301 protein ML0028 (202 aa).

Belongs to the UPF0301 (AlgH) family.

The protein is UPF0301 protein ML0028 of Mycobacterium leprae (strain TN).